We begin with the raw amino-acid sequence, 25 residues long: Caerin-2.3 (25 aa).

As to expression, expressed by the skin parotoid and/or rostral glands.

It localises to the secreted. In terms of biological role, acts as a male sex pheromone that attracts females. Has no antimicrobial activity. This Ranoidea caerulea (Green tree frog) protein is Caerin-2.3.